We begin with the raw amino-acid sequence, 268 residues long: 4-pyridoxolactonase (268 aa).

Zn(2+)-binding residues include histidine 96, histidine 98, aspartate 100, histidine 101, histidine 185, aspartate 207, and histidine 252. Catalysis depends on aspartate 100, which acts as the Proton donor/acceptor.

This sequence belongs to the metallo-beta-lactamase superfamily. Homodimer. Zn(2+) serves as cofactor.

It carries out the reaction 4-pyridoxolactone + H2O = 4-pyridoxate + H(+). It functions in the pathway cofactor degradation; B6 vitamer degradation; 4-pyridoxate from pyridoxal: step 2/2. With respect to regulation, inhibited by Hg(2+). Functionally, involved in the degradation of pyridoxine or pyridoxamine (free, phosphate-unbound, forms of vitamin B6). Hydrolyzes 4-pyridoxolactone to 4-pyridoxic acid. Has lower activity toward N-hexanoyl-D,L-homoserine lactone, but is not active toward 5-pyridoxolactone and gamma-butyrolactone. The sequence is that of 4-pyridoxolactonase from Mesorhizobium japonicum (strain LMG 29417 / CECT 9101 / MAFF 303099) (Mesorhizobium loti (strain MAFF 303099)).